Here is a 393-residue protein sequence, read N- to C-terminus: MQFDTIELAIEALRNGESIIVVDDEDRENEGDLVAVTEWMDDNTINFMAKEGRGLICAPIDKSIAERLKLQSMEQNNTDIYGTHFTVSIDHYKTTTGISAHERTQTARALIDENTNPEDFHRPGHLFPLIAKENGVLTRNGHTEAAVDLARLTGAQPAGVICEIMNDDGTMAKGEDLQSFKERHHLKMITIKSLVAFRKAVELNVNLKAKVKMPTDFGHFDMYGFTTDYSDEEIVAIVKGDLKSNPNVRMHSACLTGDIFHSQRCDCGAQLEASMKYIDEHGGMIIYLPQEGRGIGLINKLRAYELIEKGYDTVTANLALGFDEDLRDYHVAAEILKYFDISEINLLSNNPKKFEGLEDYGIEIVDRIELIVPETQYNHSYMETKKNKMGHLI.

The DHBP synthase stretch occupies residues 1–200; that stretch reads MQFDTIELAI…IKSLVAFRKA (200 aa). D-ribulose 5-phosphate contacts are provided by residues 27-28, D32, 139-143, and E163; these read RE and RNGHT. E28 provides a ligand contact to Mg(2+). Mg(2+) is bound at residue H142. Residues 201 to 393 are GTP cyclohydrolase II; the sequence is VELNVNLKAK…TKKNKMGHLI (193 aa). 249–253 serves as a coordination point for GTP; that stretch reads RMHSA. The Zn(2+) site is built by C254, C265, and C267. GTP is bound by residues Q270, 291–293, and T313; that span reads EGR. Residue D325 is the Proton acceptor; for GTP cyclohydrolase activity of the active site. R327 functions as the Nucleophile; for GTP cyclohydrolase activity in the catalytic mechanism. The GTP site is built by S348 and K353.

The protein in the N-terminal section; belongs to the DHBP synthase family. This sequence in the C-terminal section; belongs to the GTP cyclohydrolase II family. Mg(2+) serves as cofactor. Requires Mn(2+) as cofactor. Zn(2+) is required as a cofactor.

The enzyme catalyses D-ribulose 5-phosphate = (2S)-2-hydroxy-3-oxobutyl phosphate + formate + H(+). The catalysed reaction is GTP + 4 H2O = 2,5-diamino-6-hydroxy-4-(5-phosphoribosylamino)-pyrimidine + formate + 2 phosphate + 3 H(+). It participates in cofactor biosynthesis; riboflavin biosynthesis; 2-hydroxy-3-oxobutyl phosphate from D-ribulose 5-phosphate: step 1/1. It functions in the pathway cofactor biosynthesis; riboflavin biosynthesis; 5-amino-6-(D-ribitylamino)uracil from GTP: step 1/4. Its function is as follows. Catalyzes the conversion of D-ribulose 5-phosphate to formate and 3,4-dihydroxy-2-butanone 4-phosphate. In terms of biological role, catalyzes the conversion of GTP to 2,5-diamino-6-ribosylamino-4(3H)-pyrimidinone 5'-phosphate (DARP), formate and pyrophosphate. In Staphylococcus epidermidis (strain ATCC 12228 / FDA PCI 1200), this protein is Riboflavin biosynthesis protein RibBA.